Consider the following 435-residue polypeptide: Nuclear receptor subfamily 6 group A member 1 (435 aa).

A DNA-binding region (nuclear receptor) is located at residues 11–86 (QRACLICGDR…MGMNRKAIRE (76 aa)). 2 NR C4-type zinc fingers span residues 14-34 (CLIC…CEGC) and 50-69 (CSRD…CQYC). The interval 84 to 158 (IREDGMPGGR…STPSSSRSME (75 aa)) is disordered. Positions 121–141 (NTSWSNNGDSDHSSPGNAVSE) are enriched in polar residues. The span at 142–156 (SNQPSPVSTPSSSRS) shows a compositional bias: low complexity. The NR LBD domain occupies 204–435 (QSHTLINQLL…HSCKTIVTKE (232 aa)).

Belongs to the nuclear hormone receptor family. NR6 subfamily. As to quaternary structure, homodimer. As to expression, transiently expressed in differentiating cells of all embryonic germ layers. Expressed in an anterior to posterior concentration gradient from late gastrula to midneurula stages. Shows a complicated spatio-temporal pattern of expression during neurulation, being predominant in the neural plate and neural crest in midneurula embryos. At late tailbud (stage 30), mainly expressed in the head mesenchyme, gill arches and tail tip. Expression persists in the epidermis, somites and endoderm, and in the central nervous system, expression is restricted to the midbrain, hindbrain and part of the spinal cord. Isoforms Oo and Em are both expressed in the brain and isoform Oo is expressed in the germ cells of both the adult testis and ovary.

It is found in the cytoplasm. The protein resides in the nucleus. Probable orphan nuclear receptor. Binds to a response element containing repeats of the motif 5'-AGGTCA-3'. Required for anterior-posterior patterning during organogenesis. Acts with chordin to play a role in patterning the midbrain-hindbrain. Isoform Em is required for integrin-mediated cell matrix interaction during neurulation and for the morphogenetic movements leading to formation of the neural tube. Also mediates the effect of retinoic acid on primary neurogenesis. In Xenopus laevis (African clawed frog), this protein is Nuclear receptor subfamily 6 group A member 1.